Here is a 318-residue protein sequence, read N- to C-terminus: NADH-ubiquinone oxidoreductase chain 1 (318 aa).

Helical transmembrane passes span 2 to 22, 70 to 90, 100 to 120, 147 to 167, 172 to 192, 222 to 242, 253 to 273, and 294 to 314; these read FMINILMLIIPILLAGAFLTL, MFILAPILALGLALTMWIPLP, LGVLFMLAMSSLAVYSILWSG, AIILLSVLLMSGSFTLSTLII, TWLILPAWPLAMMWFISTLAE, LFFMAEYANIIMMNMFTAILF, ELYTINFIIKSLLLTMLFLWI, and LPLTLALCMWHVSLPILTSGI.

The protein belongs to the complex I subunit 1 family. In terms of assembly, core subunit of respiratory chain NADH dehydrogenase (Complex I) which is composed of 45 different subunits.

The protein resides in the mitochondrion inner membrane. The catalysed reaction is a ubiquinone + NADH + 5 H(+)(in) = a ubiquinol + NAD(+) + 4 H(+)(out). Its function is as follows. Core subunit of the mitochondrial membrane respiratory chain NADH dehydrogenase (Complex I) which catalyzes electron transfer from NADH through the respiratory chain, using ubiquinone as an electron acceptor. Essential for the catalytic activity and assembly of complex I. This Bos mutus grunniens (Wild yak) protein is NADH-ubiquinone oxidoreductase chain 1 (MT-ND1).